Reading from the N-terminus, the 534-residue chain is NEDD8-activating enzyme E1 regulatory subunit (534 aa).

Alanine 2 carries the post-translational modification N-acetylalanine. N6-acetyllysine occurs at positions 6 and 341. The segment at 331 to 344 is interaction with UBA3; sequence DMIADSNKYIKLQN.

Belongs to the ubiquitin-activating E1 family. ULA1 subfamily. In terms of assembly, heterodimer of UBA3 and NAE1. The complex binds NEDD8 and UBE2M. Binds APP and TP53BP2. Post-translationally, ubiquitinated by TRIP12, leading to its degradation by the proteasome. Expressed throughout the brain. In hippocampus, strongly expressed in granule cells and in the pyramidal cell layer. Strongly expressed in the piriform cortex. In the cerebellum, expressed only in Purkinje cells.

The protein resides in the cell membrane. It participates in protein modification; protein neddylation. Its activity is regulated as follows. Binding of TP53BP2 to the regulatory subunit NAE1 decreases neddylation activity. Regulatory subunit of the dimeric UBA3-NAE1 E1 enzyme. E1 activates NEDD8 by first adenylating its C-terminal glycine residue with ATP, thereafter linking this residue to the side chain of the catalytic cysteine, yielding a NEDD8-UBA3 thioester and free AMP. E1 finally transfers NEDD8 to the catalytic cysteine of UBE2M. Necessary for cell cycle progression through the S-M checkpoint. Overexpression of NAE1 causes apoptosis through deregulation of NEDD8 conjugation. The covalent attachment of NEDD8 to target proteins is known as 'neddylation' and the process is involved in the regulation of cell growth, viability and development. The chain is NEDD8-activating enzyme E1 regulatory subunit (Nae1) from Rattus norvegicus (Rat).